Consider the following 60-residue polypeptide: Conotoxin Cl1.1 (60 aa).

Residues 1 to 19 (MRCLPVIVILLLLISSAAA) form the signal peptide. A propeptide spanning residues 20–48 (VVEGPLRVNRRLRPRKAPVDMQARDWNWG) is cleaved from the precursor.

It belongs to the conotoxin T superfamily. Post-translationally, contains 2 disulfide bonds. As to expression, expressed by the venom duct.

It localises to the secreted. This Californiconus californicus (California cone) protein is Conotoxin Cl1.1.